Consider the following 231-residue polypeptide: 2-C-methyl-D-erythritol 4-phosphate cytidylyltransferase (231 aa).

The protein belongs to the IspD/TarI cytidylyltransferase family. IspD subfamily.

It catalyses the reaction 2-C-methyl-D-erythritol 4-phosphate + CTP + H(+) = 4-CDP-2-C-methyl-D-erythritol + diphosphate. It participates in isoprenoid biosynthesis; isopentenyl diphosphate biosynthesis via DXP pathway; isopentenyl diphosphate from 1-deoxy-D-xylulose 5-phosphate: step 2/6. Catalyzes the formation of 4-diphosphocytidyl-2-C-methyl-D-erythritol from CTP and 2-C-methyl-D-erythritol 4-phosphate (MEP). This chain is 2-C-methyl-D-erythritol 4-phosphate cytidylyltransferase, found in Pseudoalteromonas atlantica (strain T6c / ATCC BAA-1087).